We begin with the raw amino-acid sequence, 469 residues long: 3-isopropylmalate dehydratase large subunit (469 aa).

Residues Cys-347, Cys-408, and Cys-411 each coordinate [4Fe-4S] cluster.

The protein belongs to the aconitase/IPM isomerase family. LeuC type 1 subfamily. As to quaternary structure, heterodimer of LeuC and LeuD. Requires [4Fe-4S] cluster as cofactor.

The enzyme catalyses (2R,3S)-3-isopropylmalate = (2S)-2-isopropylmalate. Its pathway is amino-acid biosynthesis; L-leucine biosynthesis; L-leucine from 3-methyl-2-oxobutanoate: step 2/4. Its function is as follows. Catalyzes the isomerization between 2-isopropylmalate and 3-isopropylmalate, via the formation of 2-isopropylmaleate. In Actinobacillus pleuropneumoniae serotype 7 (strain AP76), this protein is 3-isopropylmalate dehydratase large subunit.